The sequence spans 319 residues: Ankyrin repeat domain-containing protein 1 (319 aa).

The stretch at 63–89 forms a coiled coil; it reads EKEREAELKKKKLEQRSKLENLEDLEI. 5 ANK repeats span residues 152–181, 185–214, 218–247, 251–280, and 284–315; these read YKRT…QIEF, LEST…KISA, LLST…DLNA, EGDT…DLNV, and AGKT…KASR.

In terms of assembly, interacts with TTN/titin and YBX1. As to expression, expressed in heart. In postnatal neonatal heart, it is expressed in an asymmetrical way; left ventricle favored towards right ventricle. Whether or not this could be correlated with a hypertrophic heart is still a matter of debate. Levels increase gradually from newborn to adult.

Its subcellular location is the nucleus. Functionally, may play an important role in endothelial cell activation. May act as a nuclear transcription factor that negatively regulates the expression of cardiac genes. In Sus scrofa (Pig), this protein is Ankyrin repeat domain-containing protein 1 (ANKRD1).